Reading from the N-terminus, the 469-residue chain is tRNA(Ile)-lysidine synthase (469 aa).

26-31 (SGGPDS) lines the ATP pocket.

Belongs to the tRNA(Ile)-lysidine synthase family.

The protein localises to the cytoplasm. It catalyses the reaction cytidine(34) in tRNA(Ile2) + L-lysine + ATP = lysidine(34) in tRNA(Ile2) + AMP + diphosphate + H(+). In terms of biological role, ligates lysine onto the cytidine present at position 34 of the AUA codon-specific tRNA(Ile) that contains the anticodon CAU, in an ATP-dependent manner. Cytidine is converted to lysidine, thus changing the amino acid specificity of the tRNA from methionine to isoleucine. The chain is tRNA(Ile)-lysidine synthase from Clostridium perfringens (strain 13 / Type A).